Reading from the N-terminus, the 62-residue chain is MIEFAYSLKNDPKKAFDEIRSKAENLDFRPNLAIVYLTEHLQKDAKVFKFDFDTLWCLLKGL.

This is an uncharacterized protein from Archaeoglobus fulgidus (strain ATCC 49558 / DSM 4304 / JCM 9628 / NBRC 100126 / VC-16).